The sequence spans 260 residues: Sphinganine C4-monooxygenase 1 (260 aa).

3 helical membrane-spanning segments follow: residues 11–31 (LLGT…YVAL), 55–75 (SVVK…ILLF), and 92–112 (FLVL…WQYF). The region spanning 99–235 (FVTAMIVLDT…FVMWDRILGT (137 aa)) is the Fatty acid hydroxylase domain. Positions 114-118 (HRYMH) match the Histidine box-1 motif. The short motif at 128–132 (HSQHH) is the Histidine box-2 element. The Histidine box-3 signature appears at 207–213 (YHDIHHQ).

It belongs to the sterol desaturase family. Fe cation is required as a cofactor. As to expression, ubiquitous, with higher levels in flowers and roots.

The protein localises to the endoplasmic reticulum membrane. The enzyme catalyses a dihydroceramide + 2 Fe(II)-[cytochrome b5] + O2 + 2 H(+) = a phytoceramide + 2 Fe(III)-[cytochrome b5] + H2O. It functions in the pathway membrane lipid metabolism; sphingolipid biosynthesis. Functionally, involved in sphingolipid trihydroxy long-chain base (4-hydroxysphinganine) biosynthesis. Can use C18- and C20-sphinganine as substrates to produce C18- and C20-phytosphinganines (D-ribo-2-amino-1,3,4-trihydroxyoctadecane and -eicosane). In Arabidopsis thaliana (Mouse-ear cress), this protein is Sphinganine C4-monooxygenase 1 (SBH1).